A 425-amino-acid chain; its full sequence is Histidine--tRNA ligase (425 aa).

The protein belongs to the class-II aminoacyl-tRNA synthetase family. Homodimer.

The protein resides in the cytoplasm. The catalysed reaction is tRNA(His) + L-histidine + ATP = L-histidyl-tRNA(His) + AMP + diphosphate + H(+). The polypeptide is Histidine--tRNA ligase (Streptococcus uberis (strain ATCC BAA-854 / 0140J)).